The sequence spans 218 residues: Deoxyribose-phosphate aldolase (218 aa).

The Proton donor/acceptor role is filled by Asp89. Lys152 acts as the Schiff-base intermediate with acetaldehyde in catalysis. Lys182 functions as the Proton donor/acceptor in the catalytic mechanism.

This sequence belongs to the DeoC/FbaB aldolase family. DeoC type 1 subfamily.

The protein resides in the cytoplasm. It catalyses the reaction 2-deoxy-D-ribose 5-phosphate = D-glyceraldehyde 3-phosphate + acetaldehyde. It participates in carbohydrate degradation; 2-deoxy-D-ribose 1-phosphate degradation; D-glyceraldehyde 3-phosphate and acetaldehyde from 2-deoxy-alpha-D-ribose 1-phosphate: step 2/2. Functionally, catalyzes a reversible aldol reaction between acetaldehyde and D-glyceraldehyde 3-phosphate to generate 2-deoxy-D-ribose 5-phosphate. The polypeptide is Deoxyribose-phosphate aldolase (Kocuria rhizophila (strain ATCC 9341 / DSM 348 / NBRC 103217 / DC2201)).